The sequence spans 383 residues: MILSQTMVAEAEIRVLDVKCHISAPKDQKNFQIDEVRVSESVRAEISGSAETPRFGSGMSCVTTTIGESASDFIPTIRSGSFADIRSRETMEDEHICIDDLSAHLGSYNFSVPSAFYGVFDGHGGPEAAIFMKENLTRLFFQDAVFPEMPSIVDAFFLEELENSHRKAFALADLAMADETIVSGSCGTTALTALIIGRHLLVANAGDCRAVLCRRGVAVDMSFDHRSTYEPERRRIEDLGGYFEDGYLNGVLAVTRAIGDWELKNPFTDSSSPLISDPEIGQIILTEDDEFLILACDGIWDVLSSQNAVSNVRQGLRRHGDPRQCAMELGKEAARLQSSDNMTVIVICFSSVPSSPKQPQRRRLRFCVSDEARARLQAMLAGE.

One can recognise a PPM-type phosphatase domain in the interval 78–349 (RSGSFADIRS…DNMTVIVICF (272 aa)). Residues Asp-121, Gly-122, Asp-297, and Asp-340 each contribute to the Mn(2+) site.

This sequence belongs to the PP2C family. Requires Mg(2+) as cofactor. Mn(2+) serves as cofactor.

The catalysed reaction is O-phospho-L-seryl-[protein] + H2O = L-seryl-[protein] + phosphate. It catalyses the reaction O-phospho-L-threonyl-[protein] + H2O = L-threonyl-[protein] + phosphate. The protein is Probable protein phosphatase 2C 13 of Arabidopsis thaliana (Mouse-ear cress).